The sequence spans 760 residues: Probable myosin-binding protein 4 (760 aa).

Residues 26–46 (WFLILLMFIDALLSYLLVWFA) traverse the membrane as a helical segment. Disordered stretches follow at residues 161-189 (SRGR…SLKK), 247-273 (SEKR…QPVL), 292-311 (SMLG…VKAK), and 348-595 (EAEV…KHSA). Over residues 352 to 366 (SGSSSPSGGEFLSPS) the composition is skewed to low complexity. A compositionally biased stretch (basic and acidic residues) spans 371 to 383 (ASREIRIQEHDDS). The span at 385–394 (DFSQNITSSA) shows a compositional bias: polar residues. Residues 388-416 (QNITSSAMEIEEFEAAIEQKESDHMDVSG) adopt a coiled-coil conformation. A compositionally biased stretch (basic and acidic residues) spans 404–413 (IEQKESDHMD). Composition is skewed to acidic residues over residues 446-458 (LEQE…ESEV) and 517-526 (EEDVDNEESE). Basic and acidic residues-rich tracts occupy residues 537–550 (VKEE…HGDH) and 562–580 (SKEE…KITE). The 99-residue stretch at 611–709 (SLVEVLKQQL…DLEMELEYYR (99 aa)) folds into the GTD-binding domain. The segment at 725-760 (GILGNTEETNVTSPTDETSIKDSTDTKLTGSPSAEN) is disordered. Composition is skewed to polar residues over residues 730–741 (TEETNVTSPTDE) and 750–760 (TKLTGSPSAEN).

Its subcellular location is the endomembrane system. In terms of biological role, membrane-anchored myosin receptors that define a distinct, plant-specific transport vesicle compartment. This Arabidopsis thaliana (Mouse-ear cress) protein is Probable myosin-binding protein 4.